Here is a 502-residue protein sequence, read N- to C-terminus: Probable cytosol aminopeptidase (502 aa).

The Mn(2+) site is built by Lys-269 and Asp-274. Lys-281 is an active-site residue. Residues Asp-292, Asp-351, and Glu-353 each contribute to the Mn(2+) site. Arg-355 is a catalytic residue.

The protein belongs to the peptidase M17 family. The cofactor is Mn(2+).

The protein resides in the cytoplasm. It catalyses the reaction Release of an N-terminal amino acid, Xaa-|-Yaa-, in which Xaa is preferably Leu, but may be other amino acids including Pro although not Arg or Lys, and Yaa may be Pro. Amino acid amides and methyl esters are also readily hydrolyzed, but rates on arylamides are exceedingly low.. The catalysed reaction is Release of an N-terminal amino acid, preferentially leucine, but not glutamic or aspartic acids.. Presumably involved in the processing and regular turnover of intracellular proteins. Catalyzes the removal of unsubstituted N-terminal amino acids from various peptides. The protein is Probable cytosol aminopeptidase of Vibrio parahaemolyticus serotype O3:K6 (strain RIMD 2210633).